The primary structure comprises 386 residues: Putative acid--amine ligase YgiC (386 aa).

100–102 (RLD) contributes to the ATP binding site. Asp-102, Glu-115, and Asn-117 together coordinate Mg(2+). ATP contacts are provided by residues Lys-267, Lys-302, Gly-309, Gln-336, and 371–373 (LIT).

Belongs to the glutathionylspermidine synthase preATP-grasp family.

Functionally, may be a ligase forming an amide bond. Shows ATPase activity. This is Putative acid--amine ligase YgiC (ygiC) from Escherichia coli O157:H7.